Consider the following 91-residue polypeptide: UPF0250 protein mma_3250 (91 aa).

The protein belongs to the UPF0250 family.

In Janthinobacterium sp. (strain Marseille) (Minibacterium massiliensis), this protein is UPF0250 protein mma_3250.